The sequence spans 604 residues: Protein glass (604 aa).

Disordered stretches follow at residues 111 to 139 (ISTT…HGYW), 199 to 237 (NSHN…GGNN), 359 to 400 (LPPL…SPTS), and 414 to 434 (EDEE…GGEM). Low complexity-rich tracts occupy residues 117–126 (ASSGNGSSNN) and 200–237 (SHNH…GGNN). The span at 414–427 (EDEEDSNEDLDGDE) shows a compositional bias: acidic residues. 5 consecutive C2H2-type zinc fingers follow at residues 437–459 (NLCR…LRTH), 465–487 (YRCP…VRTH), 493–515 (FRCP…MRTH), 521–543 (YRCS…LRIH), and 549–571 (YQCK…MRVH). Residues 566-604 (RHMRVHGNNNSSNGSNGATGVGGESSTGSGVGGGNSLLT) form a disordered region. Low complexity predominate over residues 572-581 (GNNNSSNGSN). Residues 582 to 604 (GATGVGGESSTGSGVGGGNSLLT) show a composition bias toward gly residues.

It is found in the nucleus. Transcription factor required for gene expression specific to photoreceptor cells. The protein is Protein glass (gl) of Drosophila melanogaster (Fruit fly).